Here is a 262-residue protein sequence, read N- to C-terminus: Ribosomal RNA small subunit methyltransferase A (262 aa).

S-adenosyl-L-methionine is bound by residues histidine 11, isoleucine 13, glycine 38, glutamate 60, aspartate 85, and asparagine 105.

This sequence belongs to the class I-like SAM-binding methyltransferase superfamily. rRNA adenine N(6)-methyltransferase family. RsmA subfamily.

The protein localises to the cytoplasm. It carries out the reaction adenosine(1518)/adenosine(1519) in 16S rRNA + 4 S-adenosyl-L-methionine = N(6)-dimethyladenosine(1518)/N(6)-dimethyladenosine(1519) in 16S rRNA + 4 S-adenosyl-L-homocysteine + 4 H(+). Functionally, specifically dimethylates two adjacent adenosines (A1518 and A1519) in the loop of a conserved hairpin near the 3'-end of 16S rRNA in the 30S particle. May play a critical role in biogenesis of 30S subunits. In Neorickettsia sennetsu (strain ATCC VR-367 / Miyayama) (Ehrlichia sennetsu), this protein is Ribosomal RNA small subunit methyltransferase A.